A 1190-amino-acid chain; its full sequence is Pyruvate-flavodoxin oxidoreductase (1190 aa).

4Fe-4S ferredoxin-type domains are found at residues 687–716 (EIPV…SKVY) and 743–773 (FTIQ…PRKK). [4Fe-4S] cluster is bound by residues cysteine 696, cysteine 699, cysteine 702, cysteine 706, cysteine 752, cysteine 755, cysteine 758, cysteine 762, cysteine 826, cysteine 829, cysteine 854, and cysteine 1089.

Belongs to the pyruvate:ferredoxin/flavodoxin oxidoreductase family. It depends on [4Fe-4S] cluster as a cofactor.

The enzyme catalyses oxidized [flavodoxin] + pyruvate + CoA + 2 H(+) = reduced [flavodoxin] + acetyl-CoA + CO2. Functionally, oxidoreductase required for the transfer of electrons from pyruvate to flavodoxin, which reduces nitrogenase. The sequence is that of Pyruvate-flavodoxin oxidoreductase (nifJ) from Trichormus variabilis (strain ATCC 29413 / PCC 7937) (Anabaena variabilis).